Consider the following 635-residue polypeptide: MRQSDRGAELTNEDRALPTPPDPENGLSGILRLLLQELSLFYSRDVNGLCLLYDLLHSPWLQALLKVYDCLQRFKEKKLVPDTTHAQILACEVLELLPKASGSPEIQELRQVLQAPHCKALLSAHDTVAQKDFEPLLPPLPDNIPDSEEAMRIVCLVKNQQPLGATIKRHEITGDILVARVIHGGLVERSGLLYAGDKLVEVNGVSVEGLDPEQVIHILAMSCGTIMFKVIPVSAPPVSSQKMVYVRAMIDYWPQEDPDIPCMDAGLPFLKGDILQIVDQNDALWWQARKISDLTICAGLIPSNHLLKRKQREFWWSQPYQPHTCLKSTRALSMEEEDSMKIDEKCVEADEETFESEELAEAKDEFVGDGQKFFIAGFRRSMRLCRRKSHFSQLHASLCCSCSCYSAVGAPYEEVVRYQRQPADKHRLIVLVGPSGVGVNELRRQLIGCNPSCFQSAVPHTTRFPKSYEMDGREYHYVSRETFESLMYGHKMLEYGEYKGHLYGTSVNAVHAVLDEGKICIMDLEPQDIQSARTRDLKPYVIFIKPPNTSSMRHSRKNAKITTDYYVDMKFKDEDLQEMEELAQKMESQFGQFFDHVIVNDNLQDACGQLLSAIQKAQEELQWVPEAWVSPDTES.

A compositionally biased stretch (basic and acidic residues) spans 1–16; sequence MRQSDRGAELTNEDRA. Positions 1-23 are disordered; sequence MRQSDRGAELTNEDRALPTPPDP. L27 domains are found at residues 23 to 79 and 86 to 136; these read PENG…EKKL and AQIL…FEPL. A PDZ domain is found at 153–234; that stretch reads IVCLVKNQQP…TIMFKVIPVS (82 aa). The SH3 domain occupies 241 to 311; the sequence is QKMVYVRAMI…PSNHLLKRKQ (71 aa). One can recognise a Guanylate kinase-like domain in the interval 426–615; it reads HRLIVLVGPS…ACGQLLSAIQ (190 aa). A coiled-coil region spans residues 567–622; that stretch reads VDMKFKDEDLQEMEELAQKMESQFGQFFDHVIVNDNLQDACGQLLSAIQKAQEELQ.

Belongs to the MAGUK family. In terms of assembly, may interact with GRIA2. Interacts with MPDZ. Forms a complex with CRB1 and PALS1. Interacts with FASLG. Detected in the retina (at protein level). Highly enriched in the retina where it is mainly expressed by rod photoreceptors; detected in the inner segment of the photoreceptor layer and in the outer nuclear layer. Also detected at much lower levels in pineal gland, cerebellum, cortex, hippocampus, olfactory bulb, heart, liver and spleen. Expressed in the CA1-CA3 regions of pyramidal cell layers and in the granule cell layer of dentate gyrus in the hippocampus. In the cerebellum, expressed in Purkinje cells and throughout the granule cell layer. In the olfactory bulb, expressed in mitral cells.

Its subcellular location is the cytoplasm. Its function is as follows. May play a role in retinal photoreceptors development. In Mus musculus (Mouse), this protein is MAGUK p55 subfamily member 4 (Mpp4).